Here is a 338-residue protein sequence, read N- to C-terminus: UDP-glucose 4-epimerase (338 aa).

NAD(+) contacts are provided by residues Y11–I12, D31–S36, D58–I59, F80–K84, N99, S124, Y149, K153, and F178. Substrate contacts are provided by S124 and Y149. Y149 serves as the catalytic Proton acceptor. Substrate is bound by residues N179, N199–L200, A216–F218, R231, R292–D295, and Y299.

Belongs to the NAD(P)-dependent epimerase/dehydratase family. Homodimer. The cofactor is NAD(+).

The enzyme catalyses UDP-alpha-D-glucose = UDP-alpha-D-galactose. It functions in the pathway carbohydrate metabolism; galactose metabolism. Functionally, involved in the metabolism of galactose. Catalyzes the conversion of UDP-galactose (UDP-Gal) to UDP-glucose (UDP-Glc) through a mechanism involving the transient reduction of NAD. This chain is UDP-glucose 4-epimerase (galE), found in Salmonella typhimurium (strain LT2 / SGSC1412 / ATCC 700720).